A 96-amino-acid chain; its full sequence is ESAT-6-like protein EsxH (96 aa).

Positions 14, 70, 76, and 77 each coordinate Zn(2+).

The protein belongs to the WXG100 family. ESAT-6 subfamily. Forms a tight 1:1 complex with EsxG. When it is complexed to EsxG, interacts directly with host HGS/HRS.

The protein resides in the secreted. EsxH, in complex with EsxG, disrupts ESCRT function and impairs host phagosome maturation, thereby promoting intracellular bacterial growth. The complex acts by interacting, via EsxH, with the host hepatocyte growth factor-regulated tyrosine kinase substrate (HGS/HRS), a component of the ESCRT machinery. The polypeptide is ESAT-6-like protein EsxH (Mycobacterium tuberculosis (strain ATCC 25618 / H37Rv)).